A 230-amino-acid polypeptide reads, in one-letter code: NADH-quinone oxidoreductase subunit 9 (230 aa).

4Fe-4S ferredoxin-type domains follow at residues 60–93 and 104–133; these read GRPV…MQAK and AWFE…MSKE. [4Fe-4S] cluster contacts are provided by cysteine 73, cysteine 76, cysteine 79, cysteine 83, cysteine 113, cysteine 116, cysteine 119, and cysteine 123.

The protein belongs to the complex I 23 kDa subunit family. In terms of assembly, NDH-1 is composed of 14 different subunits. Subunits Nqo7-14 constitute the membrane sector of the complex. It depends on [4Fe-4S] cluster as a cofactor.

It is found in the cell inner membrane. The enzyme catalyses a quinone + NADH + 5 H(+)(in) = a quinol + NAD(+) + 4 H(+)(out). Functionally, NDH-1 shuttles electrons from NADH, via FMN and iron-sulfur (Fe-S) centers, to quinones in the respiratory chain. The immediate electron acceptor for the enzyme in this species is believed to be menaquinone. Couples the redox reaction to proton translocation (for every two electrons transferred, four hydrogen ions are translocated across the cytoplasmic membrane), and thus conserves the redox energy in a proton gradient. The sequence is that of NADH-quinone oxidoreductase subunit 9 (nqo9) from Rhodothermus marinus (Rhodothermus obamensis).